Here is a 199-residue protein sequence, read N- to C-terminus: FMN-dependent NADH:quinone oxidoreductase (199 aa).

17 to 19 provides a ligand contact to FMN; that stretch reads SYS.

It belongs to the azoreductase type 1 family. In terms of assembly, homodimer. It depends on FMN as a cofactor.

The enzyme catalyses 2 a quinone + NADH + H(+) = 2 a 1,4-benzosemiquinone + NAD(+). It catalyses the reaction N,N-dimethyl-1,4-phenylenediamine + anthranilate + 2 NAD(+) = 2-(4-dimethylaminophenyl)diazenylbenzoate + 2 NADH + 2 H(+). Its function is as follows. Quinone reductase that provides resistance to thiol-specific stress caused by electrophilic quinones. Also exhibits azoreductase activity. Catalyzes the reductive cleavage of the azo bond in aromatic azo compounds to the corresponding amines. This is FMN-dependent NADH:quinone oxidoreductase from Mycoplasmopsis synoviae (strain 53) (Mycoplasma synoviae).